Consider the following 515-residue polypeptide: Maturase K (515 aa).

The protein belongs to the intron maturase 2 family. MatK subfamily.

It is found in the plastid. Its subcellular location is the chloroplast. Its function is as follows. Usually encoded in the trnK tRNA gene intron. Probably assists in splicing its own and other chloroplast group II introns. This chain is Maturase K, found in Pinus clausa (Sand pine).